Here is a 333-residue protein sequence, read N- to C-terminus: MNSSNLEKLNCKSSIRDEVVPSRKRVTLPPWLEVAKPRLIPLLLATTLGGMALTEEWPLSSPKLICTLGGGALAAAAAGALNCLWEMELDKRMTRTSKRALPAGKLSSETVFLAAVSCTLAASMLLVSGVNYLAAGLTLLGLFSYVILYTVILKPRTTKNIVFGGVAGAIPPLVGASAATGHVGLSGWWLFGLVMLWTPAHFWALAILLKDDYASVGIPMLPSVKGSVFTAKAISRYGWATVLMSIMGVFALPEGGLLYGIMLLPFNGRLLQLINELKKSPDDLSRAKSLFRWSILYMFGICLLLLISRTQLSVEFEQQSMQIFFSILSLLSN.

The next 7 membrane-spanning stretches (helical) occupy residues 64–84 (LICTLGGGALAAAAAGALNCL), 110–130 (TVFLAAVSCTLAASMLLVSGV), 133–153 (LAAGLTLLGLFSYVILYTVIL), 161–181 (IVFGGVAGAIPPLVGASAATG), 189–209 (WLFGLVMLWTPAHFWALAILL), 246–266 (IMGVFALPEGGLLYGIMLLPF), and 287–307 (AKSLFRWSILYMFGICLLLLI).

It belongs to the UbiA prenyltransferase family. Protoheme IX farnesyltransferase subfamily.

The protein localises to the cell inner membrane. It carries out the reaction heme b + (2E,6E)-farnesyl diphosphate + H2O = Fe(II)-heme o + diphosphate. The protein operates within porphyrin-containing compound metabolism; heme O biosynthesis; heme O from protoheme: step 1/1. Functionally, converts heme B (protoheme IX) to heme O by substitution of the vinyl group on carbon 2 of heme B porphyrin ring with a hydroxyethyl farnesyl side group. The polypeptide is Protoheme IX farnesyltransferase (Prochlorococcus marinus (strain MIT 9215)).